Here is a 182-residue protein sequence, read N- to C-terminus: MLRFNLIVAVCENFGIGIRGDLPWRIKSELKYFSRTTKRTSDPTKQNAVVMGRKTYFGVPESKRPLPDRLNIVLSTTLQESDLPKGVLLCPNLETAMKILEEQNEVENIWIVGGSGVYEEAMASPRCHRLYITKIMQKFDCDTFFPAIPDSFREVAPDSDMPLGVQEENGIKFEYKILEKHS.

The DHFR domain maps to 3 to 180; it reads RFNLIVAVCE…IKFEYKILEK (178 aa). NADP(+) is bound by residues Ala-9 and 15-21; that span reads GIGIRGD. Position 29–34 (29–34) interacts with substrate; sequence ELKYFS. 53-55 is a binding site for NADP(+); it reads RKT. Arg-69 serves as a coordination point for substrate. Residues 75–77 and 113–120 each bind NADP(+); these read STT and GGSGVYEE.

This sequence belongs to the dihydrofolate reductase family. As to quaternary structure, monomer. Interacts with vg.

It catalyses the reaction (6S)-5,6,7,8-tetrahydrofolate + NADP(+) = 7,8-dihydrofolate + NADPH + H(+). It participates in cofactor biosynthesis; tetrahydrofolate biosynthesis; 5,6,7,8-tetrahydrofolate from 7,8-dihydrofolate: step 1/1. Its function is as follows. By interacting with vestigial (vg), may control genes involved in DNA replication. Functionally, key enzyme in folate metabolism. Catalyzes an essential reaction for de novo glycine and purine synthesis, and for DNA precursor synthesis. The sequence is that of Dihydrofolate reductase (Dhfr) from Drosophila melanogaster (Fruit fly).